Reading from the N-terminus, the 156-residue chain is ATP synthase subunit b (156 aa).

A helical transmembrane segment spans residues 4 to 26; sequence GATFWGPMISFALFVWFTMKYVW.

The protein belongs to the ATPase B chain family. In terms of assembly, F-type ATPases have 2 components, F(1) - the catalytic core - and F(0) - the membrane proton channel. F(1) has five subunits: alpha(3), beta(3), gamma(1), delta(1), epsilon(1). F(0) has three main subunits: a(1), b(2) and c(10-14). The alpha and beta chains form an alternating ring which encloses part of the gamma chain. F(1) is attached to F(0) by a central stalk formed by the gamma and epsilon chains, while a peripheral stalk is formed by the delta and b chains.

The protein localises to the cell inner membrane. In terms of biological role, f(1)F(0) ATP synthase produces ATP from ADP in the presence of a proton or sodium gradient. F-type ATPases consist of two structural domains, F(1) containing the extramembraneous catalytic core and F(0) containing the membrane proton channel, linked together by a central stalk and a peripheral stalk. During catalysis, ATP synthesis in the catalytic domain of F(1) is coupled via a rotary mechanism of the central stalk subunits to proton translocation. Component of the F(0) channel, it forms part of the peripheral stalk, linking F(1) to F(0). This is ATP synthase subunit b from Alkalilimnicola ehrlichii (strain ATCC BAA-1101 / DSM 17681 / MLHE-1).